Here is a 261-residue protein sequence, read N- to C-terminus: Glucose 1-dehydrogenase 2 (261 aa).

Residue 11 to 35 participates in NADP(+) binding; it reads VVTGGSKGLGRAMAVRFGQEQSKVV. Serine 145 provides a ligand contact to substrate. Tyrosine 158 acts as the Proton acceptor in catalysis.

It belongs to the short-chain dehydrogenases/reductases (SDR) family. Homotetramer.

It carries out the reaction D-glucose + NAD(+) = D-glucono-1,5-lactone + NADH + H(+). The enzyme catalyses D-glucose + NADP(+) = D-glucono-1,5-lactone + NADPH + H(+). In Priestia megaterium (Bacillus megaterium), this protein is Glucose 1-dehydrogenase 2 (gdhII).